Consider the following 154-residue polypeptide: Large ribosomal subunit protein uL11 (154 aa).

This sequence belongs to the universal ribosomal protein uL11 family. Part of the ribosomal stalk of the 50S ribosomal subunit. Interacts with L10 and the large rRNA to form the base of the stalk. L10 forms an elongated spine to which L12 dimers bind in a sequential fashion forming a multimeric L10(L12)X complex. In terms of processing, one or more lysine residues are methylated.

In terms of biological role, forms part of the ribosomal stalk which helps the ribosome interact with GTP-bound translation factors. This is Large ribosomal subunit protein uL11 from Leuconostoc mesenteroides subsp. mesenteroides (strain ATCC 8293 / DSM 20343 / BCRC 11652 / CCM 1803 / JCM 6124 / NCDO 523 / NBRC 100496 / NCIMB 8023 / NCTC 12954 / NRRL B-1118 / 37Y).